The following is a 149-amino-acid chain: Endoribonuclease YbeY (149 aa).

Zn(2+)-binding residues include H115, H119, and H125.

The protein belongs to the endoribonuclease YbeY family. The cofactor is Zn(2+).

Its subcellular location is the cytoplasm. Its function is as follows. Single strand-specific metallo-endoribonuclease involved in late-stage 70S ribosome quality control and in maturation of the 3' terminus of the 16S rRNA. The sequence is that of Endoribonuclease YbeY from Mycoplasmopsis pulmonis (strain UAB CTIP) (Mycoplasma pulmonis).